We begin with the raw amino-acid sequence, 101 residues long: Aspartyl/glutamyl-tRNA(Asn/Gln) amidotransferase subunit C (101 aa).

It belongs to the GatC family. In terms of assembly, heterotrimer of A, B and C subunits.

The enzyme catalyses L-glutamyl-tRNA(Gln) + L-glutamine + ATP + H2O = L-glutaminyl-tRNA(Gln) + L-glutamate + ADP + phosphate + H(+). The catalysed reaction is L-aspartyl-tRNA(Asn) + L-glutamine + ATP + H2O = L-asparaginyl-tRNA(Asn) + L-glutamate + ADP + phosphate + 2 H(+). Its function is as follows. Allows the formation of correctly charged Asn-tRNA(Asn) or Gln-tRNA(Gln) through the transamidation of misacylated Asp-tRNA(Asn) or Glu-tRNA(Gln) in organisms which lack either or both of asparaginyl-tRNA or glutaminyl-tRNA synthetases. The reaction takes place in the presence of glutamine and ATP through an activated phospho-Asp-tRNA(Asn) or phospho-Glu-tRNA(Gln). This chain is Aspartyl/glutamyl-tRNA(Asn/Gln) amidotransferase subunit C, found in Lactobacillus delbrueckii subsp. bulgaricus (strain ATCC 11842 / DSM 20081 / BCRC 10696 / JCM 1002 / NBRC 13953 / NCIMB 11778 / NCTC 12712 / WDCM 00102 / Lb 14).